A 270-amino-acid chain; its full sequence is Endochitinase PR4 (270 aa).

Residues 1–23 (MGNKLVLVLVAVALVMGPKNVSA) form the signal peptide. Residues 24 to 58 (QNCGCAEGLCCSQYGYCGTGEDYCGTGCQQGPCTT) enclose the Chitin-binding type-1 domain. Intrachain disulfides connect Cys-26-Cys-34, Cys-28-Cys-40, Cys-33-Cys-47, Cys-51-Cys-56, Cys-88-Cys-137, Cys-150-Cys-160, and Cys-238-Cys-270. The active-site Proton donor is the Glu-132.

It belongs to the glycosyl hydrolase 19 family. Chitinase class I subfamily.

The catalysed reaction is Random endo-hydrolysis of N-acetyl-beta-D-glucosaminide (1-&gt;4)-beta-linkages in chitin and chitodextrins.. Functionally, defense against chitin-containing fungal pathogens. This is Endochitinase PR4 (CHI4) from Phaseolus vulgaris (Kidney bean).